Reading from the N-terminus, the 392-residue chain is S-adenosylmethionine synthase (392 aa).

An ATP-binding site is contributed by His-17. Asp-19 contacts Mg(2+). Residue Glu-45 coordinates K(+). Glu-58 and Gln-102 together coordinate L-methionine. Positions 102–112 (QSADIAQGVDA) are flexible loop. ATP-binding positions include 169–171 (DAK), 235–236 (KF), Asp-244, 250–251 (RK), Ala-267, and Lys-271. Asp-244 is an L-methionine binding site. Lys-275 is an L-methionine binding site.

Belongs to the AdoMet synthase family. In terms of assembly, homotetramer; dimer of dimers. Mg(2+) is required as a cofactor. K(+) serves as cofactor.

It localises to the cytoplasm. The catalysed reaction is L-methionine + ATP + H2O = S-adenosyl-L-methionine + phosphate + diphosphate. The protein operates within amino-acid biosynthesis; S-adenosyl-L-methionine biosynthesis; S-adenosyl-L-methionine from L-methionine: step 1/1. Catalyzes the formation of S-adenosylmethionine (AdoMet) from methionine and ATP. The overall synthetic reaction is composed of two sequential steps, AdoMet formation and the subsequent tripolyphosphate hydrolysis which occurs prior to release of AdoMet from the enzyme. This is S-adenosylmethionine synthase from Methylobacterium radiotolerans (strain ATCC 27329 / DSM 1819 / JCM 2831 / NBRC 15690 / NCIMB 10815 / 0-1).